We begin with the raw amino-acid sequence, 335 residues long: MKAKDIVLKKSEEIEGLAIEGPWLDEVESLEGVISYYEKIGFQATHLGKAVKIWRKVEEKRKGGEEVRVFLGYTSNIVSSGLREIIAWLVKERKVDVIVTTAGGIEEDFIKTLKPFILGDWEVNDAELREKGINRIGNIFVPNDRYIEFEKYMVPFFERILDIERKLKRPLTASEFIYEMGRYMDEVLGKEKEKSIIYWAYKRDVPIFCPAITDGSIGDMLYFFKEERHDSKLVIDIANDIVKLNNLAITAKETASIILGGSLPKHAIINANLFRGGTDYAIYISTAVPWDGSLSGAPPSEGVSWGKIKAKADYVEIWADATLVFPILVWMVMKA.

K307 acts as the Nucleophile in catalysis.

The protein belongs to the deoxyhypusine synthase family. NAD(+) serves as cofactor.

The catalysed reaction is [eIF5A protein]-L-lysine + spermidine = [eIF5A protein]-deoxyhypusine + propane-1,3-diamine. Its pathway is protein modification; eIF5A hypusination. In terms of biological role, catalyzes the NAD-dependent oxidative cleavage of spermidine and the subsequent transfer of the butylamine moiety of spermidine to the epsilon-amino group of a specific lysine residue of the eIF-5A precursor protein to form the intermediate deoxyhypusine residue. The polypeptide is Probable deoxyhypusine synthase (dys) (Pyrococcus abyssi (strain GE5 / Orsay)).